The primary structure comprises 371 residues: Chaperone protein DnaJ (371 aa).

A J domain is found at 5–69; sequence DYYEVLGLSK…QKRAQYDQFG (65 aa). The segment at 133–215 adopts a CR-type zinc-finger fold; that stretch reads GKELNVEIPV…CHGSGKVRKR (83 aa). Zn(2+)-binding residues include C146, C149, C163, C166, C189, C192, C203, and C206. CXXCXGXG motif repeat units lie at residues 146 to 153, 163 to 170, 189 to 196, and 203 to 210; these read CDTCKGSG, CKHCSGSG, CSHCSGTG, and CTTCHGSG.

Belongs to the DnaJ family. As to quaternary structure, homodimer. It depends on Zn(2+) as a cofactor.

It localises to the cytoplasm. Functionally, participates actively in the response to hyperosmotic and heat shock by preventing the aggregation of stress-denatured proteins and by disaggregating proteins, also in an autonomous, DnaK-independent fashion. Unfolded proteins bind initially to DnaJ; upon interaction with the DnaJ-bound protein, DnaK hydrolyzes its bound ATP, resulting in the formation of a stable complex. GrpE releases ADP from DnaK; ATP binding to DnaK triggers the release of the substrate protein, thus completing the reaction cycle. Several rounds of ATP-dependent interactions between DnaJ, DnaK and GrpE are required for fully efficient folding. Also involved, together with DnaK and GrpE, in the DNA replication of plasmids through activation of initiation proteins. This Bacillus cereus (strain AH820) protein is Chaperone protein DnaJ.